A 73-amino-acid chain; its full sequence is DNA-directed RNA polymerase subunit epsilon (73 aa).

It belongs to the RNA polymerase subunit epsilon family. RNAP is composed of a core of 2 alpha, a beta and a beta' subunit. The core is associated with a delta subunit, and at least one of epsilon or omega. When a sigma factor is associated with the core the holoenzyme is formed, which can initiate transcription.

It catalyses the reaction RNA(n) + a ribonucleoside 5'-triphosphate = RNA(n+1) + diphosphate. In terms of biological role, a non-essential component of RNA polymerase (RNAP). This Lactobacillus helveticus (strain DPC 4571) protein is DNA-directed RNA polymerase subunit epsilon.